The sequence spans 578 residues: Zinc finger protein with KRAB and SCAN domains 8 (578 aa).

The interval 1–20 (MAEESRKPSAPSPPDQTPEE) is disordered. Phosphoserine is present on S12. Residue K26 forms a Glycyl lysine isopeptide (Lys-Gly) (interchain with G-Cter in SUMO2) linkage. The region spanning 51 to 133 (RLRFRQLRYQ…TLLEDLERQI (83 aa)) is the SCAN box domain. The disordered stretch occupies residues 158 to 205 (ASAPEPPNTQLQSEATQHKSPVPQESQERAMSTSQSPTRSQKGSSGDQ). The span at 165–205 (NTQLQSEATQHKSPVPQESQERAMSTSQSPTRSQKGSSGDQ) shows a compositional bias: polar residues. Glycyl lysine isopeptide (Lys-Gly) (interchain with G-Cter in SUMO2) cross-links involve residues K176 and K199. S201 is modified (phosphoserine). The KRAB domain occupies 220 to 316 (EKIEDMAVSL…GRLERQRGNP (97 aa)). Residues K221, K272, and K288 each participate in a glycyl lysine isopeptide (Lys-Gly) (interchain with G-Cter in SUMO2) cross-link. 2 C2H2-type zinc fingers span residues 322–344 (HKCDECGKSFAQSSGLVRHWRIH) and 350–372 (YQCNVCGKAFSYRSALLSHQDIH). Residues K374 and K376 each participate in a glycyl lysine isopeptide (Lys-Gly) (interchain with G-Cter in SUMO2) cross-link. 7 consecutive C2H2-type zinc fingers follow at residues 378–400 (YHCKECGKAFSQNTGLILHQRIH), 406–428 (YQCNQCGKAFSQSAGLILHQRIH), 434–456 (YECNECGKAFSHSSHLIGHQRIH), 462–484 (YECDECGKTFRRSSHLIGHQRSH), 490–512 (YKCNECGRAFSQKSGLIEHQRIH), 518–540 (YKCKECGKAFNGNTGLIQHLRIH), and 546–568 (YQCNECGKAFIQRSSLIRHQRIH). Residues K413 and K441 each participate in a glycyl lysine isopeptide (Lys-Gly) (interchain with G-Cter in SUMO2) cross-link. K502 is covalently cross-linked (Glycyl lysine isopeptide (Lys-Gly) (interchain with G-Cter in SUMO2)). K572 participates in a covalent cross-link: Glycyl lysine isopeptide (Lys-Gly) (interchain with G-Cter in SUMO2).

This sequence belongs to the krueppel C2H2-type zinc-finger protein family.

Its subcellular location is the nucleus. May be involved in transcriptional regulation. In Homo sapiens (Human), this protein is Zinc finger protein with KRAB and SCAN domains 8 (ZKSCAN8).